The primary structure comprises 953 residues: 26S proteasome non-ATPase regulatory subunit 1 (953 aa).

The residue at position 1 (Met1) is an N-acetylmethionine; partial. Residue Thr273 is modified to Phosphothreonine. Residues 279–318 (PGSTNTGTVPGSEKDSDSMETEEKTGSAFVGKTPEASPEP) form a disordered region. A Phosphoserine modification is found at Ser290. A compositionally biased stretch (basic and acidic residues) spans 290 to 303 (SEKDSDSMETEEKT). Lys310 carries the post-translational modification N6-acetyllysine. A Phosphothreonine modification is found at Thr311. At Ser315 the chain carries Phosphoserine. PC repeat units lie at residues 403–436 (TATASLGVIHKGHEKEALQLMATYLPKDTSPGSA), 441–474 (GGLYALGLIHANHGGDIIDYLLNQLKNASNDIVR), 476–510 (GGSLGLGLAAMGTARQDVYDLLKTNLYQDDAVTGE), 511–545 (AAGLALGLVMLGSKNAQAIEDMVGYAQETQHEKIL), 547–580 (GLAVGIALVMYGRMEEADALIESLCRDKDPILRR), 581–616 (SGMYTVAMAYCGSGNNKAIRRLLHVAVSDVNDDVRR), 617–649 (AAVESLGFILFRTPEQCPSVVSLLSESYNPHVR), 651–685 (GAAMALGICCAGTGNKEAINLLEPMTNDPVNYVRQ), 686–726 (GALI…DVMA), and 729–761 (GAILAQGILDAGGHNVTISLQSRTGHTHMPSVV). Lys720 bears the N6-acetyllysine mark. Thr830 carries the post-translational modification Phosphothreonine. Ser834 carries the phosphoserine modification. Disordered stretches follow at residues 839–881 (AKKK…LDNP) and 930–953 (AHGPKIEEEEQEPEPPEPFEYIDD). Basic and acidic residues-rich tracts occupy residues 842–852 (KEKEKEKKEEE) and 859–872 (AEKKEEKEKKKEPE). The segment covering 936-953 (EEEEQEPEPPEPFEYIDD) has biased composition (acidic residues).

It belongs to the proteasome subunit S1 family. As to quaternary structure, component of the 19S proteasome regulatory particle complex. The 26S proteasome consists of a 20S core particle (CP) and two 19S regulatory subunits (RP). The regulatory particle is made of a lid composed of 9 subunits, a base containing 6 ATPases and few additional components including PSMD1. Interacts with ADRM1. Interacts with ZFAND1.

In terms of biological role, component of the 26S proteasome, a multiprotein complex involved in the ATP-dependent degradation of ubiquitinated proteins. This complex plays a key role in the maintenance of protein homeostasis by removing misfolded or damaged proteins, which could impair cellular functions, and by removing proteins whose functions are no longer required. Therefore, the proteasome participates in numerous cellular processes, including cell cycle progression, apoptosis, or DNA damage repair. The protein is 26S proteasome non-ATPase regulatory subunit 1 (PSMD1) of Pongo abelii (Sumatran orangutan).